The sequence spans 142 residues: Peptide methionine sulfoxide reductase MsrB (142 aa).

A MsrB domain is found at 3–126; sequence KEELKKKLSP…NSAALRFIPF (124 aa). Residue cysteine 115 is the Nucleophile of the active site.

This sequence belongs to the MsrB Met sulfoxide reductase family.

It catalyses the reaction L-methionyl-[protein] + [thioredoxin]-disulfide + H2O = L-methionyl-(R)-S-oxide-[protein] + [thioredoxin]-dithiol. This chain is Peptide methionine sulfoxide reductase MsrB, found in Lactococcus lactis subsp. cremoris (strain SK11).